The following is a 272-amino-acid chain: ATP synthase subunit a (272 aa).

5 helical membrane passes run 41–61 (TLNI…LVLF), 101–121 (LIAP…LMDL), 147–167 (DVNI…FYSI), 212–232 (LFGN…LLPW), and 243–263 (AIFH…LTIV).

It belongs to the ATPase A chain family. F-type ATPases have 2 components, CF(1) - the catalytic core - and CF(0) - the membrane proton channel. CF(1) has five subunits: alpha(3), beta(3), gamma(1), delta(1), epsilon(1). CF(0) has three main subunits: a(1), b(2) and c(9-12). The alpha and beta chains form an alternating ring which encloses part of the gamma chain. CF(1) is attached to CF(0) by a central stalk formed by the gamma and epsilon chains, while a peripheral stalk is formed by the delta and b chains.

It localises to the cell inner membrane. In terms of biological role, key component of the proton channel; it plays a direct role in the translocation of protons across the membrane. The sequence is that of ATP synthase subunit a from Cronobacter sakazakii (strain ATCC BAA-894) (Enterobacter sakazakii).